The sequence spans 600 residues: Mitoguardin 1 (600 aa).

The next 2 helical transmembrane spans lie at 15–32 and 38–58; these read TYAV…YSLS and PVAK…IFLA. Residues Ser257 and Ser261 each carry the phosphoserine modification.

It belongs to the mitoguardin family. As to quaternary structure, homodimer and heterodimer; forms heterodimers with MIGA2. Interacts with PLD6/MitoPLD.

It localises to the mitochondrion outer membrane. In terms of biological role, regulator of mitochondrial fusion. Acts by forming homo- and heterodimers at the mitochondrial outer membrane and facilitating the formation of PLD6/MitoPLD dimers. May act by regulating phospholipid metabolism via PLD6/MitoPLD. The protein is Mitoguardin 1 of Mus musculus (Mouse).